We begin with the raw amino-acid sequence, 185 residues long: Probable E3 ubiquitin-protein ligase ATL44 (185 aa).

A helical membrane pass occupies residues 29-49 (VVILSALLCALICVAGLAAVV). An RING-type; atypical zinc finger spans residues 102–144 (CAICLTDFADGEEIRVLPLCGHSFHVECIDKWLVSRSSCPSCR). A disordered region spans residues 163–185 (MKDQAHRHQHHQHSSTTIPTFLP). Residues 176–185 (SSTTIPTFLP) show a composition bias toward polar residues.

The protein belongs to the RING-type zinc finger family. ATL subfamily. In terms of assembly, interacts with BIK1. Post-translationally, auto-monoubiquitination. In terms of tissue distribution, expressed in stems, flowers and green siliques.

The protein resides in the membrane. The catalysed reaction is S-ubiquitinyl-[E2 ubiquitin-conjugating enzyme]-L-cysteine + [acceptor protein]-L-lysine = [E2 ubiquitin-conjugating enzyme]-L-cysteine + N(6)-ubiquitinyl-[acceptor protein]-L-lysine.. Its pathway is protein modification; protein ubiquitination. Its function is as follows. E3 ubiquitin-protein ligase that possess E3 ubiquitin ligase activity in vitro and mediates protein monoubiquitination. Triggers the monoubiquitination of phosphorylated BIK1 in response to pathogen-associated molecular pattern (PAMP) detection. This chain is Probable E3 ubiquitin-protein ligase ATL44, found in Arabidopsis thaliana (Mouse-ear cress).